Reading from the N-terminus, the 404-residue chain is Acetylornithine aminotransferase (404 aa).

Pyridoxal 5'-phosphate-binding positions include 113 to 114 (GT) and F139. R142 serves as a coordination point for N(2)-acetyl-L-ornithine. 224 to 227 (DEVQ) contributes to the pyridoxal 5'-phosphate binding site. N6-(pyridoxal phosphate)lysine is present on K253. S281 lines the N(2)-acetyl-L-ornithine pocket. T282 lines the pyridoxal 5'-phosphate pocket.

This sequence belongs to the class-III pyridoxal-phosphate-dependent aminotransferase family. ArgD subfamily. In terms of assembly, homodimer. Requires pyridoxal 5'-phosphate as cofactor.

It localises to the cytoplasm. The catalysed reaction is N(2)-acetyl-L-ornithine + 2-oxoglutarate = N-acetyl-L-glutamate 5-semialdehyde + L-glutamate. It participates in amino-acid biosynthesis; L-arginine biosynthesis; N(2)-acetyl-L-ornithine from L-glutamate: step 4/4. The polypeptide is Acetylornithine aminotransferase (Mycobacterium leprae (strain TN)).